The primary structure comprises 106 residues: Large ribosomal subunit protein uL24 (106 aa).

The protein belongs to the universal ribosomal protein uL24 family. In terms of assembly, part of the 50S ribosomal subunit.

Functionally, one of two assembly initiator proteins, it binds directly to the 5'-end of the 23S rRNA, where it nucleates assembly of the 50S subunit. Its function is as follows. One of the proteins that surrounds the polypeptide exit tunnel on the outside of the subunit. The sequence is that of Large ribosomal subunit protein uL24 from Spiroplasma kunkelii.